A 218-amino-acid chain; its full sequence is ATP-dependent Clp protease proteolytic subunit 2 (218 aa).

This sequence belongs to the peptidase S14 family. As to quaternary structure, fourteen ClpP subunits assemble into 2 heptameric rings which stack back to back to give a disk-like structure with a central cavity, resembling the structure of eukaryotic proteasomes.

The protein localises to the cytoplasm. The enzyme catalyses Hydrolysis of proteins to small peptides in the presence of ATP and magnesium. alpha-casein is the usual test substrate. In the absence of ATP, only oligopeptides shorter than five residues are hydrolyzed (such as succinyl-Leu-Tyr-|-NHMec, and Leu-Tyr-Leu-|-Tyr-Trp, in which cleavage of the -Tyr-|-Leu- and -Tyr-|-Trp bonds also occurs).. Its function is as follows. Cleaves peptides in various proteins in a process that requires ATP hydrolysis. Has a chymotrypsin-like activity. Plays a major role in the degradation of misfolded proteins. The protein is ATP-dependent Clp protease proteolytic subunit 2 of Gloeobacter violaceus (strain ATCC 29082 / PCC 7421).